A 254-amino-acid polypeptide reads, in one-letter code: Indole-3-glycerol phosphate synthase (254 aa).

The protein belongs to the TrpC family.

The catalysed reaction is 1-(2-carboxyphenylamino)-1-deoxy-D-ribulose 5-phosphate + H(+) = (1S,2R)-1-C-(indol-3-yl)glycerol 3-phosphate + CO2 + H2O. It participates in amino-acid biosynthesis; L-tryptophan biosynthesis; L-tryptophan from chorismate: step 4/5. This chain is Indole-3-glycerol phosphate synthase, found in Methanopyrus kandleri (strain AV19 / DSM 6324 / JCM 9639 / NBRC 100938).